Consider the following 545-residue polypeptide: DnaJ homolog subfamily C member 21 (545 aa).

Residues 3 to 69 (CHYEVLGVKR…QERAWYDNHR (67 aa)) form the J domain. Disordered regions lie at residues 122-141 (EKEH…SFGE), 276-302 (EYGQ…IANV), 331-497 (SFKS…KEVN), and 522-545 (HATA…RKNR). Acidic residues-rich tracts occupy residues 129–141 (EEDE…SFGE) and 283–295 (DASD…EELE). A coiled-coil region spans residues 180–286 (RWEKRAMEKE…YGQEFGDASD (107 aa)). Residues 323-347 (LYCPACDKSFKSDKAMKNHSKSKKH) form a C2H2-type 1 zinc finger. Residues 339–348 (KNHSKSKKHR) show a composition bias toward basic residues. The segment covering 372–388 (REEDDEEEDDDDDDEQN) has biased composition (acidic residues). The segment covering 394–406 (KLSKRQKKKKRLQ) has biased composition (basic residues). A C2H2-type 2 zinc finger spans residues 498–522 (LRCVTCQYEFTTRNKLFDHLKSTGH). A compositionally biased stretch (basic residues) spans 535-545 (SKKKKDSRKNR).

May act as a co-chaperone for HSP70. This Danio rerio (Zebrafish) protein is DnaJ homolog subfamily C member 21 (dnajc21).